The sequence spans 346 residues: Methylthioribose-1-phosphate isomerase (346 aa).

Residues 45-47 (RGA), arginine 87, and glutamine 194 contribute to the substrate site. Residue aspartate 235 is the Proton donor of the active site. Residue 245 to 246 (NK) participates in substrate binding.

This sequence belongs to the eIF-2B alpha/beta/delta subunits family. MtnA subfamily.

The catalysed reaction is 5-(methylsulfanyl)-alpha-D-ribose 1-phosphate = 5-(methylsulfanyl)-D-ribulose 1-phosphate. Its pathway is amino-acid biosynthesis; L-methionine biosynthesis via salvage pathway; L-methionine from S-methyl-5-thio-alpha-D-ribose 1-phosphate: step 1/6. In terms of biological role, catalyzes the interconversion of methylthioribose-1-phosphate (MTR-1-P) into methylthioribulose-1-phosphate (MTRu-1-P). This Syntrophomonas wolfei subsp. wolfei (strain DSM 2245B / Goettingen) protein is Methylthioribose-1-phosphate isomerase.